Here is a 156-residue protein sequence, read N- to C-terminus: uncharacterized protein (156 aa).

The protein resides in the mitochondrion. This is an uncharacterized protein from Paramecium tetraurelia.